The chain runs to 1241 residues: Interphotoreceptor matrix proteoglycan 2 (1241 aa).

Positions 1–22 (MIMFPLFGKISLGILIFVLIEG) are cleaved as a signal peptide. The Extracellular portion of the chain corresponds to 23–1099 (DFPSLTAQTY…KHCEEFVSEP (1077 aa)). A glycan (N-linked (GlcNAc...) asparagine) is linked at Asn154. Residues 180–223 (ELSSPVPVGDTSTLGDTTLSVPHPEVDAYEGASESSLERPEESI) form a disordered region. Over residues 189-199 (DTSTLGDTTLS) the composition is skewed to polar residues. Thr190 and Thr192 each carry an O-linked (GalNAc...) threonine glycan. The SEA 1 domain maps to 239 to 353 (GEQIAEFSIH…KPTVVYTISN (115 aa)). The segment at 259–267 (QDSSSFHHQ) is hyaluronan-binding motif involved in chondroitin sulfate A-binding. N-linked (GlcNAc...) asparagine glycans are attached at residues Asn301, Asn320, and Asn370. O-linked (GalNAc...) threonine glycosylation is found at Thr544 and Thr556. Basic and acidic residues predominate over residues 660–678 (QISKHSKYEHDDRSTHFPE). A disordered region spans residues 660 to 684 (QISKHSKYEHDDRSTHFPEEEPLSG). One can recognise an SEA 2 domain in the interval 897-1010 (GALVVFFSLR…YSLDVESGDE (114 aa)). Asn942 and Asn956 each carry an N-linked (GlcNAc...) asparagine glycan. 2 consecutive EGF-like domains span residues 1010–1051 (EANP…RPCQ) and 1052–1093 (SLCD…KHCE). Intrachain disulfides connect Cys1014–Cys1025, Cys1019–Cys1036, Cys1038–Cys1050, Cys1054–Cys1067, Cys1061–Cys1077, and Cys1079–Cys1092. The segment at 1080-1088 (RVGENWWYR) is hyaluronan-binding motif involved in chondroitin sulfate C-binding. Residues 1100 to 1120 (VIIGITIASVVGLLVIFSAII) traverse the membrane as a helical segment. At 1121 to 1241 (YFFIRTLQAH…FVREQQVEEV (121 aa)) the chain is on the cytoplasmic side. The hyaluronan-binding motif involved in chondroitin sulfate A- and C-binding stretch occupies residues 1125–1133 (RTLQAHHDR). Positions 1136 to 1145 (RESPFSGSSR) are hyaluronan-binding motif involved in chondroitin sulfate C-binding. A hyaluronan-binding motif involved in chondroitin sulfate A- and C-binding motif region spans residues 1210-1218 (REEIQERMR).

Post-translationally, highly glycosylated (N- and O-linked carbohydrates). As to expression, expressed in the retina (at protein level). Expressed by photoreceptors of the interphotoreceptor matrix (IPM) surrounding both rods and cones (at protein level). IPM occupies the subretinal space between the apices of the retinal pigment epithelium and the neural retina. Expressed in the pineal gland (at protein level).

It is found in the photoreceptor outer segment membrane. The protein localises to the photoreceptor inner segment membrane. It localises to the secreted. The protein resides in the extracellular space. Its subcellular location is the extracellular matrix. It is found in the interphotoreceptor matrix. Its function is as follows. Chondroitin sulfate- and hyaluronan-binding proteoglycan involved in the organization of interphotoreceptor matrix; may participate in the maturation and maintenance of the light-sensitive photoreceptor outer segment. Binds heparin. This Homo sapiens (Human) protein is Interphotoreceptor matrix proteoglycan 2 (IMPG2).